We begin with the raw amino-acid sequence, 400 residues long: Methylthioribose kinase (400 aa).

Residues Asn40, Lys57, and 111–113 (EDL) contribute to the ATP site. Asp229 lines the substrate pocket. 246-248 (DAE) is an ATP binding site. Arg344 is a binding site for substrate.

This sequence belongs to the methylthioribose kinase family. Homodimer.

The catalysed reaction is 5-(methylsulfanyl)-D-ribose + ATP = 5-(methylsulfanyl)-alpha-D-ribose 1-phosphate + ADP + H(+). It functions in the pathway amino-acid biosynthesis; L-methionine biosynthesis via salvage pathway; S-methyl-5-thio-alpha-D-ribose 1-phosphate from S-methyl-5'-thioadenosine (hydrolase route): step 2/2. Catalyzes the phosphorylation of methylthioribose into methylthioribose-1-phosphate. This is Methylthioribose kinase from Pectobacterium carotovorum subsp. carotovorum (strain PC1).